The chain runs to 185 residues: Large ribosomal subunit protein uL5 (185 aa).

Belongs to the universal ribosomal protein uL5 family. As to quaternary structure, part of the 50S ribosomal subunit; part of the 5S rRNA/L5/L18/L25 subcomplex. Contacts the 5S rRNA and the P site tRNA. Forms a bridge to the 30S subunit in the 70S ribosome.

Its function is as follows. This is one of the proteins that bind and probably mediate the attachment of the 5S RNA into the large ribosomal subunit, where it forms part of the central protuberance. In the 70S ribosome it contacts protein S13 of the 30S subunit (bridge B1b), connecting the 2 subunits; this bridge is implicated in subunit movement. Contacts the P site tRNA; the 5S rRNA and some of its associated proteins might help stabilize positioning of ribosome-bound tRNAs. This chain is Large ribosomal subunit protein uL5, found in Bradyrhizobium sp. (strain BTAi1 / ATCC BAA-1182).